The chain runs to 298 residues: Homoserine kinase (298 aa).

85 to 95 (PMGGLGSSAAS) contacts ATP.

Belongs to the GHMP kinase family. Homoserine kinase subfamily.

It localises to the cytoplasm. The enzyme catalyses L-homoserine + ATP = O-phospho-L-homoserine + ADP + H(+). The protein operates within amino-acid biosynthesis; L-threonine biosynthesis; L-threonine from L-aspartate: step 4/5. In terms of biological role, catalyzes the ATP-dependent phosphorylation of L-homoserine to L-homoserine phosphate. The chain is Homoserine kinase from Methanopyrus kandleri (strain AV19 / DSM 6324 / JCM 9639 / NBRC 100938).